The chain runs to 142 residues: Protein E6 (142 aa).

Zinc fingers lie at residues 30-66 (CVFC…CTPC) and 103-139 (CFDC…CRNC).

Belongs to the papillomaviridae E6 protein family. Forms homodimers. Interacts with ubiquitin-protein ligase UBE3A/E6-AP; this interaction stimulates UBE3A ubiquitin activity. Interacts with host BAK1.

The protein resides in the host cytoplasm. Its subcellular location is the host nucleus. Its function is as follows. Plays a major role in the induction and maintenance of cellular transformation. E6 associates with host UBE3A/E6-AP ubiquitin-protein ligase and modulates its activity. Protects host keratinocytes from apoptosis by mediating the degradation of host BAK1. May also inhibit host immune response. The polypeptide is Protein E6 (Homo sapiens (Human)).